A 20-amino-acid polypeptide reads, in one-letter code: Cytochrome c oxidase subunit 7B-liver, mitochondrial (20 aa).

Belongs to the cytochrome c oxidase VIIb family. As to quaternary structure, component of the cytochrome c oxidase (complex IV, CIV), a multisubunit enzyme composed of 14 subunits. The complex is composed of a catalytic core of 3 subunits MT-CO1, MT-CO2 and MT-CO3, encoded in the mitochondrial DNA, and 11 supernumerary subunits COX4I, COX5A, COX5B, COX6A, COX6B, COX6C, COX7A, COX7B, COX7C, COX8 and NDUFA4, which are encoded in the nuclear genome. The complex exists as a monomer or a dimer and forms supercomplexes (SCs) in the inner mitochondrial membrane with NADH-ubiquinone oxidoreductase (complex I, CI) and ubiquinol-cytochrome c oxidoreductase (cytochrome b-c1 complex, complex III, CIII), resulting in different assemblies (supercomplex SCI(1)III(2)IV(1) and megacomplex MCI(2)III(2)IV(2)).

The protein resides in the mitochondrion inner membrane. It carries out the reaction 4 Fe(II)-[cytochrome c] + O2 + 8 H(+)(in) = 4 Fe(III)-[cytochrome c] + 2 H2O + 4 H(+)(out). Its pathway is energy metabolism; oxidative phosphorylation. Component of the cytochrome c oxidase, the last enzyme in the mitochondrial electron transport chain which drives oxidative phosphorylation. The respiratory chain contains 3 multisubunit complexes succinate dehydrogenase (complex II, CII), ubiquinol-cytochrome c oxidoreductase (cytochrome b-c1 complex, complex III, CIII) and cytochrome c oxidase (complex IV, CIV), that cooperate to transfer electrons derived from NADH and succinate to molecular oxygen, creating an electrochemical gradient over the inner membrane that drives transmembrane transport and the ATP synthase. Cytochrome c oxidase is the component of the respiratory chain that catalyzes the reduction of oxygen to water. Electrons originating from reduced cytochrome c in the intermembrane space (IMS) are transferred via the dinuclear copper A center (CU(A)) of subunit 2 and heme A of subunit 1 to the active site in subunit 1, a binuclear center (BNC) formed by heme A3 and copper B (CU(B)). The BNC reduces molecular oxygen to 2 water molecules using 4 electrons from cytochrome c in the IMS and 4 protons from the mitochondrial matrix. The chain is Cytochrome c oxidase subunit 7B-liver, mitochondrial from Thunnus obesus (Bigeye tuna).